We begin with the raw amino-acid sequence, 37 residues long: Cytochrome b6-f complex subunit 5 (37 aa).

A helical membrane pass occupies residues 5 to 25 (LLSGIVLGLIPITLFGLLVAA).

The protein belongs to the PetG family. As to quaternary structure, the 4 large subunits of the cytochrome b6-f complex are cytochrome b6, subunit IV (17 kDa polypeptide, PetD), cytochrome f and the Rieske protein, while the 4 small subunits are PetG, PetL, PetM and PetN. The complex functions as a dimer.

It is found in the plastid. The protein resides in the chloroplast thylakoid membrane. Component of the cytochrome b6-f complex, which mediates electron transfer between photosystem II (PSII) and photosystem I (PSI), cyclic electron flow around PSI, and state transitions. PetG is required for either the stability or assembly of the cytochrome b6-f complex. This is Cytochrome b6-f complex subunit 5 from Pyropia yezoensis (Susabi-nori).